The following is a 412-amino-acid chain: uncharacterized protein (412 aa).

This sequence belongs to the PQQ oxidoreductase GdhB family. It depends on pyrroloquinoline quinone as a cofactor.

This is an uncharacterized protein from Synechocystis sp. (strain ATCC 27184 / PCC 6803 / Kazusa).